A 320-amino-acid chain; its full sequence is Nucleoporin Nup37 (320 aa).

WD repeat units follow at residues 67 to 113 (KEQR…FTSL), 118 to 157 (GHGD…ENVI), 160 to 200 (GLSS…TVIS), and 203 to 242 (SPKF…VPAD).

The protein localises to the nucleus. It is found in the nuclear pore complex. Its function is as follows. As part of the nuclear pore complex (NPC), has a role in its assembly and function. (Microbial infection) Required for optimal replication of E.chaffeensis. The sequence is that of Nucleoporin Nup37 from Drosophila melanogaster (Fruit fly).